The chain runs to 918 residues: Signal transduction histidine-protein kinase BarA (918 aa).

The Cytoplasmic portion of the chain corresponds to 1 to 10 (MTNYSLRARM). A helical transmembrane segment spans residues 11 to 31 (MILILAPTVLIGLLLSIFFVV). Residues 32 to 175 (HRYNDLQRQL…LKSVRLQQYK (144 aa)) are Periplasmic-facing. The chain crosses the membrane as a helical span at residues 176-196 (EIFISCVMMLFCIGIALIFGW). At 197-918 (RLMRDVTGPI…VAREASKILG (722 aa)) the chain is on the cytoplasmic side. An HAMP domain is found at 200–252 (RDVTGPIRNMVNTVDRIRRGQLDSRVEGFMLGELDMLKNGINSMAMSLAAYHE). The region spanning 299-520 (NMSHELRTPL…TFWFHINLDL (222 aa)) is the Histidine kinase domain. At His302 the chain carries Phosphohistidine; by autocatalysis. Residues 669–785 (TVMAVDDNPA…RLHNLLLRYK (117 aa)) enclose the Response regulatory domain. Asp718 is subject to 4-aspartylphosphate. In terms of domain architecture, HPt spans 822–918 (KTDLARDMLQ…VAREASKILG (97 aa)). A Phosphohistidine modification is found at His861.

Activation requires a sequential transfer of a phosphate group from a His in the primary transmitter domain, to an Asp in the receiver domain and to a His in the secondary transmitter domain.

The protein resides in the cell inner membrane. It carries out the reaction ATP + protein L-histidine = ADP + protein N-phospho-L-histidine.. Its function is as follows. Member of the two-component regulatory system UvrY/BarA involved in the regulation of carbon metabolism via the CsrA/CsrB regulatory system. Phosphorylates UvrY, probably via a four-step phosphorelay. The chain is Signal transduction histidine-protein kinase BarA (barA) from Shigella flexneri.